We begin with the raw amino-acid sequence, 310 residues long: uncharacterized protein (310 aa).

9 helical membrane passes run 1–21 (MIYF…MFSK), 38–58 (FFFY…VVYT), 74–94 (TSYF…FFIF), 110–130 (YGLW…SFLF), 135–155 (WILY…IFFS), 194–214 (IFIT…IVFS), 228–248 (LFII…MYLF), 256–276 (FPIM…KILI), and 284–304 (IFLT…INLI).

Belongs to the TerC family.

It localises to the cell membrane. This is an uncharacterized protein from Buchnera aphidicola subsp. Schizaphis graminum (strain Sg).